Consider the following 502-residue polypeptide: Cysteine protease RavZ (502 aa).

Short sequence motifs (LIR) lie at residues 9–23 (DKLI…GEQE) and 23–37 (ESDI…GDEK). A catalytic region region spans residues 49–325 (SIYPPETSWE…ESALTEGKTL (277 aa)). Catalysis depends on residues H176 and D197. An alpha-3 helix region spans residues 211-217 (YFKGKYR). C258 is an active-site residue. The tract at residues 326–431 (PVQLSEFIVA…VLPCVKFDDT (106 aa)) is membrane targeting region. An LIR 3 motif is present at residues 429–443 (DDTIDDFVTIEKDEL).

The protein localises to the secreted. The protein resides in the host cytoplasmic vesicle membrane. It catalyses the reaction [protein]-C-terminal L-amino acid-glycyl-phosphatidylethanolamide + H2O = a 1,2-diacyl-sn-glycero-3-phosphoethanolamine-N-glycine + [protein]-C-terminal &lt;stereo&gt;L-&lt;/stereo&gt;amino acid. The catalysed reaction is [protein]-C-terminal L-amino acid-glycyl-phosphatidylserine + H2O = 1,2-diacyl-sn-glycero-3-phospho-L-serine-N-glycine + [protein]-C-terminal &lt;stereo&gt;L-&lt;/stereo&gt;amino acid. Cysteine protease effector that inhibits host cell autophagy by targeting lipid-conjugated ATG8 family proteins on pre-autophagosomal structures. Specifically hydrolyzes the amide bond between the C-terminal glycine residue and an adjacent aromatic residue in ATG8 proteins conjugated to phosphatidylethanolamine (PE), producing an ATG8 protein that cannot be reconjugated by host ATG7 and ATG3. Mechanistically, Ravz interacts with ATG8 proteins conjugated to PE via its LIR motifs, extracts them from the membrane of autophagosomes and integrates the PE part into its own lipid-binding site. It then removes the lipid component of the ATG8 protein. Also able to mediate delipidation of ATG8 proteins conjugated to phosphatidylserine (PS) during non-canonical autophagy. Inhibits host ubiquitin recruitment to bacteria-containing vacuoles, suggesting that it is able to mediate delipidation of other proteins in addition to ATG8 proteins. It is however not involved in the exclusion of autophagy adapters from bacteria-containing vacuoles decorated with ubiquitin. This is Cysteine protease RavZ from Legionella pneumophila subsp. pneumophila (strain Philadelphia 1 / ATCC 33152 / DSM 7513).